A 444-amino-acid chain; its full sequence is Exodeoxyribonuclease 7 large subunit (444 aa).

This sequence belongs to the XseA family. Heterooligomer composed of large and small subunits.

It localises to the cytoplasm. It carries out the reaction Exonucleolytic cleavage in either 5'- to 3'- or 3'- to 5'-direction to yield nucleoside 5'-phosphates.. Functionally, bidirectionally degrades single-stranded DNA into large acid-insoluble oligonucleotides, which are then degraded further into small acid-soluble oligonucleotides. The protein is Exodeoxyribonuclease 7 large subunit of Rickettsia conorii (strain ATCC VR-613 / Malish 7).